The following is a 410-amino-acid chain: 3-phosphoshikimate 1-carboxyvinyltransferase (410 aa).

3-phosphoshikimate is bound by residues Lys21, Ser22, and Arg26. Lys21 serves as a coordination point for phosphoenolpyruvate. Residues Gly69 and Arg97 each coordinate phosphoenolpyruvate. Residues Ser143, Ser144, Gln145, Ser171, Asp288, and Lys315 each coordinate 3-phosphoshikimate. Gln145 contacts phosphoenolpyruvate. Residue Asp288 is the Proton acceptor of the active site. Phosphoenolpyruvate-binding residues include Arg319, Arg364, and Lys389.

Belongs to the EPSP synthase family. Monomer.

The protein resides in the cytoplasm. It carries out the reaction 3-phosphoshikimate + phosphoenolpyruvate = 5-O-(1-carboxyvinyl)-3-phosphoshikimate + phosphate. The protein operates within metabolic intermediate biosynthesis; chorismate biosynthesis; chorismate from D-erythrose 4-phosphate and phosphoenolpyruvate: step 6/7. Its function is as follows. Catalyzes the transfer of the enolpyruvyl moiety of phosphoenolpyruvate (PEP) to the 5-hydroxyl of shikimate-3-phosphate (S3P) to produce enolpyruvyl shikimate-3-phosphate and inorganic phosphate. The sequence is that of 3-phosphoshikimate 1-carboxyvinyltransferase from Bacteroides fragilis (strain YCH46).